The following is a 149-amino-acid chain: Large ribosomal subunit protein uL13 (149 aa).

Belongs to the universal ribosomal protein uL13 family. As to quaternary structure, part of the 50S ribosomal subunit.

Functionally, this protein is one of the early assembly proteins of the 50S ribosomal subunit, although it is not seen to bind rRNA by itself. It is important during the early stages of 50S assembly. In Borrelia turicatae (strain 91E135), this protein is Large ribosomal subunit protein uL13.